We begin with the raw amino-acid sequence, 310 residues long: Fe-S cluster assembly protein dre2 (310 aa).

Residues 1-130 are N-terminal SAM-like domain; sequence MSGRTLLLSP…KPDIEDMRAV (130 aa). Residues 131–203 form a linker region; it reads PLRLGRKKHD…EDLLDGSELA (73 aa). [2Fe-2S] cluster contacts are provided by Cys212, Cys223, Cys226, and Cys228. Positions 212-228 are fe-S binding site A; that stretch reads CRPKAGRRRRACKDCTC. Positions 273, 276, 284, and 287 each coordinate [4Fe-4S] cluster. 2 consecutive short sequence motifs (cx2C motif) follow at residues 273-276 and 284-287; these read CGNC and CEGC. The tract at residues 273–287 is fe-S binding site B; it reads CGNCSLGDAFRCEGC.

Belongs to the anamorsin family. In terms of assembly, monomer. Interacts with tah18. Interacts with mia40. [2Fe-2S] cluster is required as a cofactor. It depends on [4Fe-4S] cluster as a cofactor.

It localises to the cytoplasm. The protein resides in the mitochondrion intermembrane space. Component of the cytosolic iron-sulfur (Fe-S) protein assembly (CIA) machinery required for the maturation of extramitochondrial Fe-S proteins. Part of an electron transfer chain functioning in an early step of cytosolic Fe-S biogenesis, facilitating the de novo assembly of a [4Fe-4S] cluster on the scaffold complex cfd1-nbp35. Electrons are transferred to dre2 from NADPH via the FAD- and FMN-containing protein tah18. Tah18-dre2 are also required for the assembly of the diferric tyrosyl radical cofactor of ribonucleotide reductase (RNR), probably by providing electrons for reduction during radical cofactor maturation in the catalytic small subunit rnr2. The protein is Fe-S cluster assembly protein dre2 of Aspergillus clavatus (strain ATCC 1007 / CBS 513.65 / DSM 816 / NCTC 3887 / NRRL 1 / QM 1276 / 107).